Here is a 338-residue protein sequence, read N- to C-terminus: tRNA dimethylallyltransferase (338 aa).

ATP is bound at residue 13–20 (GPTASGKT). Position 15-20 (15-20 (TASGKT)) interacts with substrate. Interaction with substrate tRNA stretches follow at residues 38–41 (DSTL) and 162–166 (QRVSR).

It belongs to the IPP transferase family. Monomer. Requires Mg(2+) as cofactor.

The enzyme catalyses adenosine(37) in tRNA + dimethylallyl diphosphate = N(6)-dimethylallyladenosine(37) in tRNA + diphosphate. Its function is as follows. Catalyzes the transfer of a dimethylallyl group onto the adenine at position 37 in tRNAs that read codons beginning with uridine, leading to the formation of N6-(dimethylallyl)adenosine (i(6)A). The protein is tRNA dimethylallyltransferase of Cellvibrio japonicus (strain Ueda107) (Pseudomonas fluorescens subsp. cellulosa).